The primary structure comprises 808 residues: MSSELSEGELSHTSSSSSFVPVDQRQLQDAIQIINEEKRFNQSVLEYINKTAPADVGNNYHIISVFGSQSTGKSTLLNKLFNTNFDVMDESNRQQTTKGIWLAFSPVVSTTSGHTSSKSNILVMDVEGTDGRERGEDQDFERKAALFALSTSEILIINIWETQVGLYQGANMGLLKTVFEVNLSLFGKSKLEKHDDHKVLLLIVIRDYVGVTPVESLAKTFTQDLINMWASLAKPAELEHLQFADFFDVDFHALNHKVLQPKEFSEGINKLGDRLVVGDELFKPEYHHQVPIDGWVMYAGNCWEQIETNKDLDLPTQQILVAQFKCDEIVENVFQEFLKKFEQLFGEPQAEPDYEQIGALFSDLRNDTLEDYDISASKYNKSVYEQKRVKLISLVNEKFKEVFDFYAKELSSTMLKKFHSDVVALKGKNFAASVKELSTGLIASIVTTLGLISLQGDLSSNEVTTALSKDIADIVSKQQVIELNSIVNRAVKKLTNSLSKSIQFELGDPNENTWDTVLQQFNSLSQEVLTKYDGDFGLGTTDEQNKQALDRFQFKSWTSFYESMHKLISKEKLLVLLQDRFDDVFRYDENGLPKLYLNEADLEKTFTESKQHALKVLPILTIAKLSDGSEIVPEIDIFDHKLREKYLGVADEDSDDEDDDEHCFAEIVTEQEKSEVLAKFKKEVDAKYIETKRSIVQHITQIPYYIYLVIVFLGWNEFMAIIRNPLLFSLALLLGASVYILYKLNLLKPAIVVAQRTFDETVAMGKEKLREILIDDHETQGRNLGKIAGKNPSAPAEEYSDNIELDDM.

A disordered region spans residues Met-1–Pro-21. Residues Met-1–Gln-701 lie on the Cytoplasmic side of the membrane. One can recognise a GB1/RHD3-type G domain in the interval Gly-57–Tyr-286. Residue Gly-67–Ser-74 participates in GTP binding. A helical transmembrane segment spans residues Ile-702–Ile-722. Topologically, residues Arg-723 to Pro-725 are lumenal. The helical transmembrane segment at Leu-726 to Leu-746 threads the bilayer. Topologically, residues Leu-747–Met-808 are cytoplasmic.

Belongs to the TRAFAC class dynamin-like GTPase superfamily. GB1/RHD3 GTPase family. RHD3 subfamily.

The protein localises to the endoplasmic reticulum membrane. Functionally, cooperates with the reticulon proteins and tubule-shaping DP1 family proteins to generate and maintain the structure of the tubular endoplasmic reticulum network. Has GTPase activity, which is required for its function in ER organization. The chain is Protein SEY1 from Candida tropicalis (strain ATCC MYA-3404 / T1) (Yeast).